The chain runs to 309 residues: Porphobilinogen deaminase (309 aa).

Cys240 is subject to S-(dipyrrolylmethanemethyl)cysteine.

The protein belongs to the HMBS family. As to quaternary structure, monomer. Dipyrromethane is required as a cofactor.

It carries out the reaction 4 porphobilinogen + H2O = hydroxymethylbilane + 4 NH4(+). The protein operates within porphyrin-containing compound metabolism; protoporphyrin-IX biosynthesis; coproporphyrinogen-III from 5-aminolevulinate: step 2/4. Its function is as follows. Tetrapolymerization of the monopyrrole PBG into the hydroxymethylbilane pre-uroporphyrinogen in several discrete steps. The chain is Porphobilinogen deaminase from Brevibacillus brevis (strain 47 / JCM 6285 / NBRC 100599).